Here is a 359-residue protein sequence, read N- to C-terminus: Peptide chain release factor 1 (359 aa).

Residue Q235 is modified to N5-methylglutamine. The tract at residues 280 to 306 is disordered; the sequence is AERQRADSERSADRKSQVGSGDRSERI.

The protein belongs to the prokaryotic/mitochondrial release factor family. In terms of processing, methylated by PrmC. Methylation increases the termination efficiency of RF1.

It is found in the cytoplasm. Peptide chain release factor 1 directs the termination of translation in response to the peptide chain termination codons UAG and UAA. The sequence is that of Peptide chain release factor 1 from Rhizobium leguminosarum bv. trifolii (strain WSM2304).